The chain runs to 87 residues: Beta-toxin CsE3 (87 aa).

The signal sequence occupies residues 1–19 (MNSLLIIAACLALIGTVWA). The 66-residue stretch at 20–85 (KEGYIVNYHT…VWPLPKKKCN (66 aa)) folds into the LCN-type CS-alpha/beta domain. 4 cysteine pairs are disulfide-bonded: C31/C84, C35/C60, C44/C65, and C48/C67. Position 85 is an asparagine amide (N85).

This sequence belongs to the long (4 C-C) scorpion toxin superfamily. Sodium channel inhibitor family. Beta subfamily. As to expression, expressed by the venom gland.

It is found in the secreted. Its function is as follows. Beta toxins bind voltage-independently at site-4 of sodium channels (Nav) and shift the voltage of activation toward more negative potentials thereby affecting sodium channel activation and promoting spontaneous and repetitive firing. This Centruroides sculpturatus (Arizona bark scorpion) protein is Beta-toxin CsE3.